The sequence spans 309 residues: L-lactate dehydrogenase 2 (309 aa).

NAD(+)-binding positions include Val16, Asp37, Tyr67, and 81–82; that span reads GV. Arg90 contributes to the substrate binding site. Residue Ser103 participates in NAD(+) binding. Position 122–125 (122–125) interacts with substrate; it reads NPVD. An NAD(+)-binding site is contributed by Thr145. 150–153 is a binding site for substrate; it reads DTAR. Catalysis depends on His177, which acts as the Proton acceptor. Residue Thr227 coordinates substrate.

This sequence belongs to the LDH/MDH superfamily. LDH family. Homotetramer.

It is found in the cytoplasm. The enzyme catalyses (S)-lactate + NAD(+) = pyruvate + NADH + H(+). It functions in the pathway fermentation; pyruvate fermentation to lactate; (S)-lactate from pyruvate: step 1/1. Its function is as follows. Catalyzes the conversion of lactate to pyruvate. The sequence is that of L-lactate dehydrogenase 2 from Lactiplantibacillus plantarum (strain ATCC BAA-793 / NCIMB 8826 / WCFS1) (Lactobacillus plantarum).